Consider the following 513-residue polypeptide: ATP synthase subunit alpha (513 aa).

169–176 provides a ligand contact to ATP; sequence GDRQTGKT.

Belongs to the ATPase alpha/beta chains family. F-type ATPases have 2 components, CF(1) - the catalytic core - and CF(0) - the membrane proton channel. CF(1) has five subunits: alpha(3), beta(3), gamma(1), delta(1), epsilon(1). CF(0) has three main subunits: a(1), b(2) and c(9-12). The alpha and beta chains form an alternating ring which encloses part of the gamma chain. CF(1) is attached to CF(0) by a central stalk formed by the gamma and epsilon chains, while a peripheral stalk is formed by the delta and b chains.

The protein localises to the cell inner membrane. It catalyses the reaction ATP + H2O + 4 H(+)(in) = ADP + phosphate + 5 H(+)(out). Its function is as follows. Produces ATP from ADP in the presence of a proton gradient across the membrane. The alpha chain is a regulatory subunit. The protein is ATP synthase subunit alpha of Klebsiella pneumoniae (strain 342).